Reading from the N-terminus, the 303-residue chain is Methionyl-tRNA formyltransferase (303 aa).

109–112 (SLLP) is a binding site for (6S)-5,6,7,8-tetrahydrofolate.

Belongs to the Fmt family.

The catalysed reaction is L-methionyl-tRNA(fMet) + (6R)-10-formyltetrahydrofolate = N-formyl-L-methionyl-tRNA(fMet) + (6S)-5,6,7,8-tetrahydrofolate + H(+). Its function is as follows. Attaches a formyl group to the free amino group of methionyl-tRNA(fMet). The formyl group appears to play a dual role in the initiator identity of N-formylmethionyl-tRNA by promoting its recognition by IF2 and preventing the misappropriation of this tRNA by the elongation apparatus. This chain is Methionyl-tRNA formyltransferase, found in Helicobacter pylori (strain ATCC 700392 / 26695) (Campylobacter pylori).